The following is a 286-amino-acid chain: Ribosome-inactivating protein momordin I (286 aa).

The first 23 residues, 1-23 (MSRFSVLSFLILAIFLGGSIVKG), serve as a signal peptide directing secretion. The active site involves Glu183. Asn250 carries an N-linked (GlcNAc...) asparagine glycan. A propeptide spans 270 to 286 (AEGDNGDVSTTHGFSSY) (removed in mature form).

Belongs to the ribosome-inactivating protein family. Type 1 RIP subfamily.

It catalyses the reaction Endohydrolysis of the N-glycosidic bond at one specific adenosine on the 28S rRNA.. This is Ribosome-inactivating protein momordin I from Momordica charantia (Bitter gourd).